A 322-amino-acid polypeptide reads, in one-letter code: Lipoyl synthase (322 aa).

Over residues 1-14 the composition is skewed to polar residues; sequence MKTLDENQAPSRQT. Residues 1-30 form a disordered region; that stretch reads MKTLDENQAPSRQTPESHRRGAEKLSRIPV. Residues 15 to 26 are compositionally biased toward basic and acidic residues; sequence PESHRRGAEKLS. Residues Cys70, Cys75, Cys81, Cys96, Cys100, Cys103, and Ser310 each contribute to the [4Fe-4S] cluster site. The 218-residue stretch at 82–299 folds into the Radical SAM core domain; the sequence is FGHGTATFMI…AGYARELGFA (218 aa).

The protein belongs to the radical SAM superfamily. Lipoyl synthase family. Requires [4Fe-4S] cluster as cofactor.

Its subcellular location is the cytoplasm. It carries out the reaction [[Fe-S] cluster scaffold protein carrying a second [4Fe-4S](2+) cluster] + N(6)-octanoyl-L-lysyl-[protein] + 2 oxidized [2Fe-2S]-[ferredoxin] + 2 S-adenosyl-L-methionine + 4 H(+) = [[Fe-S] cluster scaffold protein] + N(6)-[(R)-dihydrolipoyl]-L-lysyl-[protein] + 4 Fe(3+) + 2 hydrogen sulfide + 2 5'-deoxyadenosine + 2 L-methionine + 2 reduced [2Fe-2S]-[ferredoxin]. The protein operates within protein modification; protein lipoylation via endogenous pathway; protein N(6)-(lipoyl)lysine from octanoyl-[acyl-carrier-protein]: step 2/2. In terms of biological role, catalyzes the radical-mediated insertion of two sulfur atoms into the C-6 and C-8 positions of the octanoyl moiety bound to the lipoyl domains of lipoate-dependent enzymes, thereby converting the octanoylated domains into lipoylated derivatives. In Methylococcus capsulatus (strain ATCC 33009 / NCIMB 11132 / Bath), this protein is Lipoyl synthase.